The following is a 283-amino-acid chain: Para-Rep C10 (283 aa).

A CRESS-DNA virus Rep endonuclease domain is found at 3–96 (SIRAIHWCFT…IDGPWEYGTW (94 aa)). Residues 10-13 (CFTL) carry the RCR-1 motif. Positions 36 and 42 each coordinate a divalent metal cation. The short motif at 42–44 (HLQ) is the RCR-2 element. The Nuclear localization signal signature appears at 51–71 (KQTTLKKMKELLPGAHLEMAR). Tyr79 serves as the catalytic For DNA cleavage activity. Residues 79–82 (YCQK) carry the RCR-3 motif. An a divalent metal cation-binding site is contributed by Glu84. The Nuclear localization signal signature appears at 96–102 (WISTGSH). 172-180 (GPHGGEGKS) lines the ATP pocket.

It belongs to the nanoviridea/circoviridae replication-associated protein family. In terms of assembly, homooligomer (Potential). Rep binds to repeated DNA motifs (iterons). Mg(2+) serves as cofactor. Requires Mn(2+) as cofactor.

The protein localises to the host nucleus. It catalyses the reaction ATP + H2O = ADP + phosphate + H(+). Functionally, initiates and terminates the replication only of its own subviral DNA molecule. The closed circular ssDNA genome is first converted to a superhelical dsDNA. Rep binds a specific hairpin at the genome origin of replication. Introduces an endonucleolytic nick within the intergenic region of the genome, thereby initiating the rolling circle replication (RCR). Following cleavage, binds covalently to the 5'-phosphate of DNA as a tyrosyl ester. The cleavage gives rise to a free 3'-OH that serves as a primer for the cellular DNA polymerase. The polymerase synthesizes the (+) strand DNA by rolling circle mechanism. After one round of replication, a Rep-catalyzed nucleotidyl transfer reaction releases a circular single-stranded virus genome, thereby terminating the replication. Displays origin-specific DNA cleavage, nucleotidyl transferase, ATPase and helicase activities. The polypeptide is Para-Rep C10 (C10) (Milk vetch dwarf C10 alphasatellite (MVDC10A)).